A 67-amino-acid chain; its full sequence is Surface composition regulator (67 aa).

It belongs to the GlgS family.

Its function is as follows. Major determinant of cell surface composition. Negatively regulates motility, adhesion and synthesis of biofilm exopolysaccharides. In Salmonella enteritidis PT4 (strain P125109), this protein is Surface composition regulator.